The following is a 148-amino-acid chain: Large ribosomal subunit protein bL9 (148 aa).

This sequence belongs to the bacterial ribosomal protein bL9 family.

Functionally, binds to the 23S rRNA. The sequence is that of Large ribosomal subunit protein bL9 from Chromohalobacter salexigens (strain ATCC BAA-138 / DSM 3043 / CIP 106854 / NCIMB 13768 / 1H11).